Consider the following 78-residue polypeptide: Large ribosomal subunit protein uL30 (78 aa).

The segment covering 58-68 (DDTSPDAETGA) has biased composition (acidic residues). The segment at 58–78 (DDTSPDAETGADLERDGGNRS) is disordered. The segment covering 69–78 (DLERDGGNRS) has biased composition (basic and acidic residues).

Belongs to the universal ribosomal protein uL30 family. Part of the 50S ribosomal subunit.

In Roseiflexus sp. (strain RS-1), this protein is Large ribosomal subunit protein uL30.